Here is a 451-residue protein sequence, read N- to C-terminus: Tubulin alpha-2 chain (451 aa).

Gln-11 serves as a coordination point for GTP. Lys-40 is subject to N6-acetyllysine. Positions 71, 144, 145, 179, 206, and 228 each coordinate GTP. Glu-71 is a Mg(2+) binding site. Residue Glu-254 is part of the active site.

Belongs to the tubulin family. As to quaternary structure, dimer of alpha and beta chains. A typical microtubule is a hollow water-filled tube with an outer diameter of 25 nm and an inner diameter of 15 nM. Alpha-beta heterodimers associate head-to-tail to form protofilaments running lengthwise along the microtubule wall with the beta-tubulin subunit facing the microtubule plus end conferring a structural polarity. Microtubules usually have 13 protofilaments but different protofilament numbers can be found in some organisms and specialized cells. Requires Mg(2+) as cofactor. In terms of processing, undergoes a tyrosination/detyrosination cycle, the cyclic removal and re-addition of a C-terminal tyrosine residue by the enzymes tubulin tyrosine carboxypeptidase (TTCP) and tubulin tyrosine ligase (TTL), respectively. Acetylation of alpha chains at Lys-40 stabilizes microtubules and affects affinity and processivity of microtubule motors. This modification has a role in multiple cellular functions, ranging from cell motility, cell cycle progression or cell differentiation to intracellular trafficking and signaling.

Its subcellular location is the cytoplasm. The protein localises to the cytoskeleton. The catalysed reaction is GTP + H2O = GDP + phosphate + H(+). In terms of biological role, tubulin is the major constituent of microtubules, a cylinder consisting of laterally associated linear protofilaments composed of alpha- and beta-tubulin heterodimers. Microtubules grow by the addition of GTP-tubulin dimers to the microtubule end, where a stabilizing cap forms. Below the cap, tubulin dimers are in GDP-bound state, owing to GTPase activity of alpha-tubulin. This chain is Tubulin alpha-2 chain (TUBA2), found in Zea mays (Maize).